The sequence spans 937 residues: Glycine dehydrogenase (decarboxylating) (937 aa).

Residue Lys-686 is modified to N6-(pyridoxal phosphate)lysine.

It belongs to the GcvP family. As to quaternary structure, the glycine cleavage system is composed of four proteins: P, T, L and H. Pyridoxal 5'-phosphate serves as cofactor.

The enzyme catalyses N(6)-[(R)-lipoyl]-L-lysyl-[glycine-cleavage complex H protein] + glycine + H(+) = N(6)-[(R)-S(8)-aminomethyldihydrolipoyl]-L-lysyl-[glycine-cleavage complex H protein] + CO2. In terms of biological role, the glycine cleavage system catalyzes the degradation of glycine. The P protein binds the alpha-amino group of glycine through its pyridoxal phosphate cofactor; CO(2) is released and the remaining methylamine moiety is then transferred to the lipoamide cofactor of the H protein. This is Glycine dehydrogenase (decarboxylating) from Mesorhizobium japonicum (strain LMG 29417 / CECT 9101 / MAFF 303099) (Mesorhizobium loti (strain MAFF 303099)).